The following is a 526-amino-acid chain: Reelin domain-containing protein 1 (526 aa).

The N-terminal stretch at 1 to 23 (MRMQAALVGWACTTLCLASCSSA) is a signal peptide. The 156-residue stretch at 24–179 (FSHGASTVAC…SAHSDDRMEP (156 aa)) folds into the Reelin domain. Topologically, residues 24 to 443 (FSHGASTVAC…PLGIQLRTPQ (420 aa)) are extracellular. Disordered stretches follow at residues 242–272 (DAET…PTLE), 294–336 (FASS…TVTQ), and 370–398 (LQTS…LPQS). A compositionally biased stretch (polar residues) spans 245–271 (TLSQPSSHTATEGSINQQPSGDSNPTL). Polar residues predominate over residues 385-396 (SEASRASASFLP). A helical membrane pass occupies residues 444–462 (LGILLCLSATLGMALAAGL). The Cytoplasmic portion of the chain corresponds to 463 to 526 (RYLHTQYCHQ…PSVGSKKTVL (64 aa)).

Its subcellular location is the membrane. The polypeptide is Reelin domain-containing protein 1 (Homo sapiens (Human)).